Here is a 217-residue protein sequence, read N- to C-terminus: Probable GTP-binding protein EngB (217 aa).

The EngB-type G domain occupies Val31–Pro205. Residues Gly39 to Ser46, Gly66 to Leu70, Asp84 to Gly87, Thr151 to Asp154, and Phe184 to Ala186 contribute to the GTP site. Residues Ser46 and Thr68 each coordinate Mg(2+).

Belongs to the TRAFAC class TrmE-Era-EngA-EngB-Septin-like GTPase superfamily. EngB GTPase family. Mg(2+) is required as a cofactor.

Its function is as follows. Necessary for normal cell division and for the maintenance of normal septation. This is Probable GTP-binding protein EngB from Shewanella amazonensis (strain ATCC BAA-1098 / SB2B).